A 206-amino-acid chain; its full sequence is 2,3-bisphosphoglycerate-dependent phosphoglycerate mutase (206 aa).

Substrate contacts are provided by residues 9-16, 22-23, Arg-61, 88-91, Lys-99, 115-116, and 159-160; these read RHGQSEWN, TG, ERNY, RR, and GN. His-10 (tele-phosphohistidine intermediate) is an active-site residue. Residue Glu-88 is the Proton donor/acceptor of the active site.

It belongs to the phosphoglycerate mutase family. BPG-dependent PGAM subfamily. As to quaternary structure, homodimer.

It carries out the reaction (2R)-2-phosphoglycerate = (2R)-3-phosphoglycerate. The protein operates within carbohydrate degradation; glycolysis; pyruvate from D-glyceraldehyde 3-phosphate: step 3/5. In terms of biological role, catalyzes the interconversion of 2-phosphoglycerate and 3-phosphoglycerate. In Bartonella tribocorum (strain CIP 105476 / IBS 506), this protein is 2,3-bisphosphoglycerate-dependent phosphoglycerate mutase.